A 1132-amino-acid polypeptide reads, in one-letter code: Serine/threonine-protein kinase spk-1 (1132 aa).

A helical transmembrane segment spans residues 75 to 95; it reads GGSLILTDIFPTVLFMFVVLF. Disordered regions lie at residues 240-388 and 419-481; these read NEDQ…DSDD and NKKA…KRGG. 2 stretches are compositionally biased toward acidic residues: residues 281 to 290 and 311 to 336; these read SEDEDVESQE and DEPI…LGDE. The segment covering 362 to 372 has biased composition (low complexity); sequence DSSVSSSTSST. Over residues 373–388 the composition is skewed to acidic residues; sequence PDDDEDDSATSYDSDD. Positions 421–433 are enriched in basic and acidic residues; that stretch reads KAEVNANEERMDD. Positions 434–443 are enriched in low complexity; it reads VSVSPGRSDS. In terms of domain architecture, Protein kinase spans 495-1044; the sequence is YHVIRKLGWG…ANDALKHPFL (550 aa). ATP-binding positions include 501-509 and Lys-524; that span reads LGWGHFSTV. Residue Asp-628 is the Proton acceptor of the active site. A disordered region spans residues 1066–1121; the sequence is QVPEALDGNQEVYRDENDSNSASERSANRSAGSDDEEEFHMDRPGPSGVINEPADV. The segment covering 1084 to 1096 has biased composition (low complexity); sequence SNSASERSANRSA.

This sequence belongs to the protein kinase superfamily. Ser/Thr protein kinase family.

It is found in the membrane. The enzyme catalyses L-seryl-[protein] + ATP = O-phospho-L-seryl-[protein] + ADP + H(+). The catalysed reaction is L-threonyl-[protein] + ATP = O-phospho-L-threonyl-[protein] + ADP + H(+). In terms of biological role, required for embryogenesis and germline development in both adult hermaphrodites and males. SR-protein kinase (SRPK) that binds directly to and phosphorylates RS domains. In Caenorhabditis briggsae, this protein is Serine/threonine-protein kinase spk-1 (spk-1).